Here is a 208-residue protein sequence, read N- to C-terminus: Probable splicing factor, arginine/serine-rich 5 (208 aa).

Positions 2 to 74 (PRLYLGKIPY…MRLVVEMARG (73 aa)) constitute an RRM domain. Residues 71–208 (MARGKPRGND…RSPSPGSPKD (138 aa)) form a disordered region. The span at 84–123 (SRSPRRRSRSPRRRSRTPPRRRSRSRDRKRSRRSRSRSSS) shows a compositional bias: basic residues. The segment covering 128 to 153 (PVRESRRRSESRSPSPKRDLKREASR) has biased composition (basic and acidic residues).

It belongs to the splicing factor SR family. In terms of processing, extensively phosphorylated on serine residues in the RS domain.

Its subcellular location is the nucleus. In terms of biological role, plays a functionally redundant role in shifting germ cell sexual differentiation in hermaphrodites. The polypeptide is Probable splicing factor, arginine/serine-rich 5 (rsp-5) (Caenorhabditis elegans).